The sequence spans 434 residues: Glutamate-1-semialdehyde 2,1-aminomutase 2 (434 aa).

Lysine 269 carries the N6-(pyridoxal phosphate)lysine modification.

This sequence belongs to the class-III pyridoxal-phosphate-dependent aminotransferase family. HemL subfamily. In terms of assembly, homodimer. Requires pyridoxal 5'-phosphate as cofactor.

It localises to the cytoplasm. The enzyme catalyses (S)-4-amino-5-oxopentanoate = 5-aminolevulinate. It functions in the pathway porphyrin-containing compound metabolism; protoporphyrin-IX biosynthesis; 5-aminolevulinate from L-glutamyl-tRNA(Glu): step 2/2. This chain is Glutamate-1-semialdehyde 2,1-aminomutase 2, found in Exiguobacterium sp. (strain ATCC BAA-1283 / AT1b).